Consider the following 601-residue polypeptide: 4-hydroxy-3-methylbut-2-en-1-yl diphosphate synthase (flavodoxin) (601 aa).

Residues Cys-507, Cys-510, Cys-542, and Glu-549 each coordinate [4Fe-4S] cluster.

It belongs to the IspG family. Requires [4Fe-4S] cluster as cofactor.

It carries out the reaction (2E)-4-hydroxy-3-methylbut-2-enyl diphosphate + oxidized [flavodoxin] + H2O + 2 H(+) = 2-C-methyl-D-erythritol 2,4-cyclic diphosphate + reduced [flavodoxin]. It functions in the pathway isoprenoid biosynthesis; isopentenyl diphosphate biosynthesis via DXP pathway; isopentenyl diphosphate from 1-deoxy-D-xylulose 5-phosphate: step 5/6. Its function is as follows. Converts 2C-methyl-D-erythritol 2,4-cyclodiphosphate (ME-2,4cPP) into 1-hydroxy-2-methyl-2-(E)-butenyl 4-diphosphate. The chain is 4-hydroxy-3-methylbut-2-en-1-yl diphosphate synthase (flavodoxin) from Chlamydia muridarum (strain MoPn / Nigg).